Reading from the N-terminus, the 38-residue chain is Glutathione S-transferase 2 (38 aa).

This sequence belongs to the GST superfamily. Phi family.

The enzyme catalyses RX + glutathione = an S-substituted glutathione + a halide anion + H(+). Conjugation of reduced glutathione to a wide number of exogenous and endogenous hydrophobic electrophiles. In plants, may have a detoxification role against certain herbicides. This Populus euphratica (Euphrates poplar) protein is Glutathione S-transferase 2.